A 1930-amino-acid chain; its full sequence is MAAAPGLLFWLFVLGALWWVPGQSDLSHGRRFSDLKVCGDEECSMLMYRGKALEDFTGPDCRFVNFKKGDDVYVYYKLAGGSLELWAGSVEHSFGYFPKDLIKVLHKYTEEELHIPADETDFVCFEGGRDDFNSYNVEELLGSLELEDSVPEESKKAEEVSQHREKSPEESRGRELDPVPEPEAFRADSEDGEGAFSESTEGLQGQPSAQESHPHTSGPAANAQGVQSSLDTFEEILHDKLKVPGSESRTGNSSPASVEREKTDAYKVLKTEMSLDLKTKFGSTADALVSDDEATRLVTSLEDGFDEALDAEYYPMEEEEEVEEDADSSDELPLLTFSDKDEKVPGKPMIEKYLTDKDPNLSEEDKVEPPTWGDAFFSIVTGGEGKPGVVDLERSIEEEEDVSVSSSHQRKPQPAAGYTDSEDEGDDLFVEEPKTNDVKDSETDPELVITGEEKDIQESRKGLVQPESQSEDAKSETASAYRLQGSKLNPLSAAEKGRDFTLKAVFEKKENGLKESVIHISKETLHEDKTREIQRDSLESELVHRALGSSVTENNKPKSLGVAPLLGNNKPDASKDSTEVPDGSVSGPKAGQQEGFLEPGLKTQHQPRFSPPEETGPSRELGGKVPISGRNLSWQQEQDVAAVVGKHANEKTGFPEEESREDGTDAEQARAIRRPQEAESPEVLSVQPGRPDEEEEEEEGDNYPPEGLMEDENAVSAQQSRENSPSARDGRSDMNSQVFEKVILGTLNLNTEKTKQPANMILETGQESETTSEEAGDVGKESGHSVVVDSEESHLADMRAQRPSQVHGLRDETAAQTPGSGEAVLSKNPNDLQKDNPEEELVNTLGLEDPGVGEISEGEPEDTKEFGVSESQGTDAEDLRDDPSRQATPEIPDIVLKSIREDLPIINSFFKDDQQSLHRFLKYFDVRELEGLLEDMSIRLRSAHQNSLPYNMEKVLDKVFRASESRILSMAEKMLDTGVAKNRDLGSKESSPLEEAEVLDDIQDLIYFVRYQYSGVETAPLVTPPPPEEGWARPGEERQPPQQDSLPQENTGDLSVQPPEEPELSDQPVTSVQPPEEPELSDQPVTSVQPPEEPELSDQPVTSVQPPEEPELSDQPVTGYTSTSEVSQKPDTKKDIDLGPVMEGGPVGAGDVQKQLETIAEEPAAVPPLESAFGSLYAFILYLSKMLLATLPDNVQPGPDFYGLPWQPVIITAVLGIVSFAIFSWRTILVVKSRVYQVTEKQISEKLENIKKENAELMQKLSSYEQKIKESKKYVQETKKQNMILSDEAVKYKDKIKILEETNVSLGDKAKSLRLQLESEREQNVKNQDLILENKKSIEKLKDVISMNASELSEVQVALNEAKLSEENVKSECHRVQEENARLKKKKEQLQQQVEEWSKSHAELTGQIKSFEKSQEDLEIALTHKDDNISALTNCITQLNRLECELESEDPDKGGNESDDLANGETGGDRSEKIRNRIKQMMDVSRTQTAVSIVEEDLKLLQLKLRASMSTKCNLEDQIKKLEDDRSSLQTAKAGLEDECKTLRQKVEILNELYQQKEMALQKKLSQEEYERQDREQRLTAADEKVVLAAEEVKTYKRRIEEMEEELQKTERSFKNQIAAHEKKAHDNWLKARAAERAMAEEKREAANLRHKLLEMTQKMAMRQDEPVIVKPMPGRPNTQNPPRRGLLSQNGSFGPSPVSGGECSPPLPAEPPGRPLSATLSRRDTPRSEFGSLDRHLPRPRWPSEASGKHSASDPGPAPVVNSSSRSSSPAKAVDEGKVNMAPKGPPPFPGVPLMGGPVPPPIRYGPPPQLCGGPFGPRPLPPPFVPGMHPPLGVREYAPGVLPGKRDLPLDPREFLPGHTPFRPPGSLGPREFFIPGTRLPPPTHGPQEYPPPPPAVRDSLPSGPREEAKPASPSSVQDRSQASKPTP.

The N-terminal stretch at M1 to S24 is a signal peptide. Residues D25–S1171 are Lumenal-facing. The region spanning M45–K107 is the SH3 domain. Disordered regions lie at residues L144–T263, E317–K496, L547–Q737, T754–I891, and T1018–A1149. The segment covering E152 to S189 has biased composition (basic and acidic residues). Polar residues predominate over residues S197 to E211. S229 is subject to Phosphoserine. A compositionally biased stretch (polar residues) spans E247 to A256. Positions E317–D330 are enriched in acidic residues. A compositionally biased stretch (basic and acidic residues) spans S338–E368. N-linked (GlcNAc...) asparagine glycosylation is present at N360. The segment covering D420 to V430 has biased composition (acidic residues). Composition is skewed to basic and acidic residues over residues E431–E442 and G451–K461. A glycan (N-linked (GlcNAc...) asparagine) is linked at N631. Basic and acidic residues predominate over residues E661–E677. Acidic residues predominate over residues D692–D701. Positions V715–S726 are enriched in polar residues. Positions E791–A800 are enriched in basic and acidic residues. Phosphoserine is present on S856. Over residues G1030–Q1039 the composition is skewed to basic and acidic residues. Polar residues-rich tracts occupy residues P1040–L1054 and Q1115–S1127. The span at Q1128–D1137 shows a compositional bias: basic and acidic residues. An intramembrane segment occupies A1172–P1192. Over D1193–Y1202 the chain is Lumenal. Residues G1203 to F1223 traverse the membrane as a helical segment. The Cytoplasmic segment spans residues S1224–P1930. Coiled coils occupy residues Y1236–D1329 and L1359–L1422. A mediates interaction with MIA2 region spans residues V1238–P1677. The segment at E1447 to E1472 is disordered. S1458 bears the Phosphoserine mark. Residues N1514–M1662 adopt a coiled-coil conformation. 3 disordered regions span residues I1669–M1796, P1801–R1820, and A1840–P1930. Over residues P1677–F1694 the composition is skewed to polar residues. A phosphoserine mark is found at S1693 and S1705. The span at P1706 to R1715 shows a compositional bias: pro residues. Residues S1722–L1738 are compositionally biased toward basic and acidic residues. 4 positions are modified to phosphoserine: S1733, S1754, S1766, and S1770. Residues P1760–K1773 show a composition bias toward low complexity. The interval D1776–P1930 is proline-rich domain (PRD); mediates interaction with the COPII coat subunits SEC23A and SEC23B. Pro residues predominate over residues P1801–Q1811. At R1805 the chain carries Asymmetric dimethylarginine. The tract at residues P1809–S1869 is SEC16A-interacting region (SIR); required for its localization to endoplasmic reticulum exit sites and for its interaction with SEC16A. Basic and acidic residues predominate over residues G1846 to L1858. Over residues R1881 to A1898 the composition is skewed to pro residues. S1915 carries the post-translational modification Phosphoserine. Positions S1915–P1930 are enriched in polar residues.

This sequence belongs to the MIA/OTOR family. Tango1 subfamily. Interacts with MIA2. Interacts (via SH3 domain) with COL7A1. Interacts with the COPII coat subunits SEC23A, SEC23B and maybe SEC24C. May interact with APOB and MIA2. Interacts with SEC16A.

The protein resides in the endoplasmic reticulum membrane. Its function is as follows. Plays a role in the transport of cargos that are too large to fit into COPII-coated vesicles and require specific mechanisms to be incorporated into membrane-bound carriers and exported from the endoplasmic reticulum. This protein is required for collagen VII (COL7A1) secretion by loading COL7A1 into transport carriers. It may participate in cargo loading of COL7A1 at endoplasmic reticulum exit sites by binding to COPII coat subunits Sec23/24 and guiding SH3-bound COL7A1 into a growing carrier. Does not play a role in global protein secretion and is apparently specific to COL7A1 cargo loading. However, it may participate in secretion of other proteins in cells that do not secrete COL7A1. It is also specifically required for the secretion of lipoproteins by participating in their export from the endoplasmic reticulum. Required for correct assembly of COPII coat components at endoplasmic reticulum exit sites (ERES) and for the localization of SEC16A and membrane-bound ER-resident complexes consisting of MIA2 and PREB/SEC12 to ERES. In Mus musculus (Mouse), this protein is Transport and Golgi organization protein 1 homolog.